The sequence spans 299 residues: ATP phosphoribosyltransferase (299 aa).

Belongs to the ATP phosphoribosyltransferase family. Long subfamily. In terms of assembly, equilibrium between an active dimeric form, an inactive hexameric form and higher aggregates. Interconversion between the various forms is largely reversible and is influenced by the natural substrates and inhibitors of the enzyme. Mg(2+) serves as cofactor.

It localises to the cytoplasm. It carries out the reaction 1-(5-phospho-beta-D-ribosyl)-ATP + diphosphate = 5-phospho-alpha-D-ribose 1-diphosphate + ATP. It participates in amino-acid biosynthesis; L-histidine biosynthesis; L-histidine from 5-phospho-alpha-D-ribose 1-diphosphate: step 1/9. Its activity is regulated as follows. Feedback inhibited by histidine. Catalyzes the condensation of ATP and 5-phosphoribose 1-diphosphate to form N'-(5'-phosphoribosyl)-ATP (PR-ATP). Has a crucial role in the pathway because the rate of histidine biosynthesis seems to be controlled primarily by regulation of HisG enzymatic activity. This chain is ATP phosphoribosyltransferase, found in Klebsiella pneumoniae (strain 342).